The sequence spans 118 residues: Late cornified envelope protein 1B (118 aa).

The segment at 87-118 (CHRPQSSGCCSQPSGGSSCCGGGSGQHSGGCC) is disordered. Positions 90-103 (PQSSGCCSQPSGGS) are enriched in low complexity. Over residues 104 to 118 (SCCGGGSGQHSGGCC) the composition is skewed to gly residues.

This sequence belongs to the LCE family. As to quaternary structure, interacts with CYSRT1; the interaction is direct. In terms of tissue distribution, skin-specific. Expression was readily detected in adult trunk skin, adult arm skin, fetal skin, penal skin, vulva, esophagus and tongue. Not expressed in the cervix, rectum, lung, colon, or placenta.

Precursors of the cornified envelope of the stratum corneum. This Homo sapiens (Human) protein is Late cornified envelope protein 1B (LCE1B).